Reading from the N-terminus, the 550-residue chain is Arginine--tRNA ligase (550 aa).

Residues Ala130–Gly140 carry the 'HIGH' region motif.

The protein belongs to the class-I aminoacyl-tRNA synthetase family. In terms of assembly, monomer.

It localises to the cytoplasm. The catalysed reaction is tRNA(Arg) + L-arginine + ATP = L-arginyl-tRNA(Arg) + AMP + diphosphate. The polypeptide is Arginine--tRNA ligase (Mycobacterium marinum (strain ATCC BAA-535 / M)).